A 97-amino-acid polypeptide reads, in one-letter code: Large ribosomal subunit protein bL21 (97 aa).

The protein belongs to the bacterial ribosomal protein bL21 family. Part of the 50S ribosomal subunit. Contacts protein L20.

Its function is as follows. This protein binds to 23S rRNA in the presence of protein L20. The protein is Large ribosomal subunit protein bL21 of Persephonella marina (strain DSM 14350 / EX-H1).